Reading from the N-terminus, the 232-residue chain is Protein TIFY 10c (232 aa).

Positions 54–73 (PPAAGAGGAFRPPPTTMNLL) are disordered. Positions 114-149 (AGEKAQQLTIFYGGKVVVFENFPSTKVKDLLQIVST) constitute a Tify domain. The tract at residues 152–177 (GVDKNTGTAATQSLPRPAHNSLPDLP) is disordered. Polar residues predominate over residues 156–165 (NTGTAATQSL). Residues 177 to 202 (PIARRNSLHRFLEKRKGRMNANAPYQ) carry the Jas motif. The short motif at 179–186 (ARRNSLHR) is the Nuclear localization signal element.

It belongs to the TIFY/JAZ family. As to quaternary structure, interacts with BHLH148. Interacts with COI1B in a coronatine-dependent manner. Coronatine is an analog of jasmonoyl isoleucine (JA-Ile). Interacts with TIFY5/JAZ2, TIFY6B/JAZ4, TIFY9/JAZ5, TIFY11A, TIFY11D/JAZ12, TIFY11G/JAZ15 and NINJA1. Ubiquitinated. Increase in jasmonoyl isoleucine (JA-Ile) levels mediates its degradation via COI1B-mediated proteasome pathway.

The protein localises to the nucleus. It is found in the cytoplasm. The protein resides in the cytosol. Its function is as follows. Repressor of jasmonate (JA) responses. Acts as a repressor of JA-induced resistance to the bacterial blight pathogen Xanthomonas oryzae pv. oryzae (Xoo). Regulates JA-induced accumulation of linalool at the transcriptional level of linalool synthase gene LIS. Linalool is important for resistance to bacterial blight pathogen Xoo. In Oryza sativa subsp. japonica (Rice), this protein is Protein TIFY 10c.